The chain runs to 353 residues: Melanin-concentrating hormone receptor 1 (353 aa).

At 1-45 (MDLQASLLSTGPNASNISDGQDNFTLAGPPPRTRSVSYINIIMPS) the chain is on the extracellular side. Asn-13, Asn-16, and Asn-23 each carry an N-linked (GlcNAc...) asparagine glycan. A helical transmembrane segment spans residues 46–66 (VFGTICLLGIVGNSTVIFAVV). Residues 67 to 79 (KKSKLHWCSNVPD) lie on the Cytoplasmic side of the membrane. The chain crosses the membrane as a helical span at residues 80–100 (IFIINLSVVDLLFLLGMPFMI). The Extracellular portion of the chain corresponds to 101–116 (HQLMGNGVWHFGETMC). An intrachain disulfide couples Cys-116 to Cys-194. A helical membrane pass occupies residues 117–139 (TLITAMDANSQFTSTYILTAMAI). The Cytoplasmic portion of the chain corresponds to 140–161 (DRYLATVHPISSTKFRKPSMAT). A helical membrane pass occupies residues 162-182 (LVICLLWALSFISITPVWLYA). The Extracellular portion of the chain corresponds to 183 to 204 (RLIPFPGGAVGCGIRLPNPDTD). Residues 205 to 225 (LYWFTLYQFFLAFALPFVVIT) form a helical membrane-spanning segment. Residues 226–256 (AAYVKILQRMTSSVAPASQRSIRLRTKRVTR) are Cytoplasmic-facing. The helical transmembrane segment at 257-277 (TAIAICLVFFVCWAPYYVLQL) threads the bilayer. Topologically, residues 278-294 (TQLSISRPTLTFVYLYN) are extracellular. The chain crosses the membrane as a helical span at residues 295–315 (AAISLGYANSCLNPFVYIVLC). The Cytoplasmic portion of the chain corresponds to 316-353 (ETFRKRLVLSVKPAAQGQLRTVSNAQTADEERTESKGT).

It belongs to the G-protein coupled receptor 1 family. In terms of assembly, interacts with NCDN. Expressed predominantly in the brain. Expression in brain is negatively regulated by leptin. Also found in the epithelium of the tongue and kidney.

The protein localises to the cell membrane. Its function is as follows. Receptor for melanin-concentrating hormone, coupled to both G proteins that inhibit adenylyl cyclase and G proteins that activate phosphoinositide hydrolysis. This chain is Melanin-concentrating hormone receptor 1, found in Mus musculus (Mouse).